Reading from the N-terminus, the 198-residue chain is HTH-type transcriptional regulator BetI (198 aa).

Positions 8 to 68 (PIRRQQLIEA…ATMRYLIRHL (61 aa)) constitute an HTH tetR-type domain. Residues 31–50 (SIAQIAKRAGVSNGIISHYF) constitute a DNA-binding region (H-T-H motif).

The protein operates within amine and polyamine biosynthesis; betaine biosynthesis via choline pathway [regulation]. Functionally, repressor involved in the biosynthesis of the osmoprotectant glycine betaine. It represses transcription of the choline transporter BetT and the genes of BetAB involved in the synthesis of glycine betaine. The sequence is that of HTH-type transcriptional regulator BetI from Yersinia pseudotuberculosis serotype O:1b (strain IP 31758).